The primary structure comprises 395 residues: Serine/threonine-protein kinase BIK1 (395 aa).

The N-myristoyl glycine moiety is linked to residue Gly-2. Residue Cys-4 is the site of S-palmitoyl cysteine attachment. Ser-26 is subject to Phosphoserine. Lys-31 is covalently cross-linked (Glycyl lysine isopeptide (Lys-Gly) (interchain with G-Cter in ubiquitin)). Phosphoserine is present on residues Ser-32, Ser-33, and Ser-34. At Thr-35 the chain carries Phosphothreonine. Lys-41 participates in a covalent cross-link: Glycyl lysine isopeptide (Lys-Gly) (interchain with G-Cter in ubiquitin). Residue Thr-42 is modified to Phosphothreonine. At Ser-48 the chain carries Phosphoserine; by autocatalysis and BAK1. At Thr-50 the chain carries Phosphothreonine. At Ser-54 the chain carries Phosphoserine; by autocatalysis. Thr-56 carries the post-translational modification Phosphothreonine; by autocatalysis. Thr-64 bears the Phosphothreonine mark. Residues 67-356 (FRPDSVIGEG…RALQQLQDNL (290 aa)) form the Protein kinase domain. The residue at position 71 (Ser-71) is a Phosphoserine; by autocatalysis and BAK1. Residue 73–81 (IGEGGFGCV) coordinates ATP. Ser-89 is subject to Phosphoserine; by EFR. The short motif at 89–90 (ST) is the Required for physical interaction with and phosphorylation of downstream signaling proteins (e.g. WRKY33, WRKY50, WRKY51 and WRKY57) to activate EFR-mediated immune signaling element. Position 90 is a phosphothreonine; by EFR (Thr-90). A Glycyl lysine isopeptide (Lys-Gly) (interchain with G-Cter in ubiquitin) cross-link involves residue Lys-95. An ATP-binding site is contributed by Lys-105. Thr-120 is subject to Phosphothreonine; by EFR. Ser-129 bears the Phosphoserine; by autocatalysis mark. Ser-129 carries the post-translational modification Phosphoserine; by EFR. Tyr-150 is modified (phosphotyrosine). The residue at position 168 (Tyr-168) is a Phosphotyrosine; by autocatalysis. Residues Lys-170 and Lys-186 each participate in a glycyl lysine isopeptide (Lys-Gly) (interchain with G-Cter in ubiquitin) cross-link. Ser-193 bears the Phosphoserine mark. Asp-202 serves as the catalytic Proton acceptor. The residue at position 206 (Ser-206) is a Phosphoserine; by autocatalysis and BAK1. Position 214 is a phosphotyrosine; by autocatalysis (Tyr-214). At Ser-219 the chain carries Phosphoserine. Ser-233 is modified (phosphoserine; by autocatalysis). An O-UMP-serine; by Xanthomonas campestris effector XopAC/AvrAC; alternate modification is found at Ser-236. The residue at position 236 (Ser-236) is a Phosphoserine; by autocatalysis and BAK1; alternate. The residue at position 237 (Thr-237) is an O-UMP-threonine; by Xanthomonas campestris effector XopAC/AvrAC; alternate. Thr-237 is subject to Phosphothreonine; by autocatalysis and BAK1; alternate. Phosphothreonine; by autocatalysis and BAK1 is present on Thr-242. A Phosphotyrosine modification is found at Tyr-243. The residue at position 250 (Tyr-250) is a Phosphotyrosine; by autocatalysis. Ser-252 and Ser-253 each carry phosphoserine; by autocatalysis. A Glycyl lysine isopeptide (Lys-Gly) (interchain with G-Cter in ubiquitin) cross-link involves residue Lys-286. Position 314 is a phosphothreonine; by autocatalysis (Thr-314). Residue Lys-337 forms a Glycyl lysine isopeptide (Lys-Gly) (interchain with G-Cter in ubiquitin) linkage. A Phosphothreonine modification is found at Thr-341. Over residues 354-365 (DNLGKPSQTNPV) the composition is skewed to polar residues. The interval 354–395 (DNLGKPSQTNPVKDTKKLGFKTGTTKSSEKRFTQKPFGRHLV) is disordered. A Glycyl lysine isopeptide (Lys-Gly) (interchain with G-Cter in ubiquitin) cross-link involves residue Lys-358. Ser-360 bears the Phosphoserine; by autocatalysis and BAK1 mark. Thr-362 is subject to Phosphothreonine; by autocatalysis and BAK1. A Glycyl lysine isopeptide (Lys-Gly) (interchain with G-Cter in ubiquitin) cross-link involves residue Lys-366. Thr-368 carries the phosphothreonine; by autocatalysis and BAK1 modification. Residues Thr-375 and Thr-377 each carry the phosphothreonine modification.

It belongs to the protein kinase superfamily. Ser/Thr protein kinase family. In terms of assembly, interacts with FLS2. Activation of FLS2 by flagellin (flg22) induces the dissociation of the complex. Interacts with BAK1. Interacts with the Xanthomonas campestris effector XopAC/AvrAC. Interacts with CPK28. Interacts with PEPR1. Interacts with PP2C38. Interacts with BRI1. Interacts with RBOHD. Binds to EFR when not phosphorylated at Ser-89 and Thr-90, in the absence of pathogen elicitor; dissociates upon pathogen-associated molecular pattern (PAMP)-triggered activation by EFR-mediated phosphorylation. Interacts directly with and phosphorylates WRKY transcription factors in the nucleus involved in the jasmonic acid (JA) and salicylic acid (SA) regulation (e.g. WRKY33, WRKY50, WRKY51 and WRKY57) to modulate defense hormones during plant immunity. Binds to ATL44/RHA3A and ATL45/RHA3B. Binds to SIK1 to be phosphorylated and stabilized. In terms of processing, phosphorylated by SIK1 to be stabilized. Phosphorylated by FLS2 and BAK1. Autophosphorylated. Autophosphorylation is reduced in presence of the Xanthomonas campestris effector XopAC/AvrAC. Phosphorylated, especially by EFR at Ser-89 and Thr-90, in response to the microbe-associated molecular pattern (MAMP) flg22. Phosphorylation in response to flg22 is abolished in presence of the Xanthomonas campestris effector XopAC/AvrAC. Phosphorylated at Ser-233, Ser-236 and Thr-237 by PEPR1. Phosphorylated at Tyr-150, Tyr-243 and Tyr-250. Tyrosine phosphorylation is required for BIK1 function in plant innate immunity. Uridylylated at Ser-236 and Thr-237 by the Xanthomonas campestris effector XopAC/AvrAC. This conceals conserved phosphorylation sites in the activation loop, reducing BIK1 kinase activity and consequently inhibiting downstream signaling. Post-translationally, monoubiquitinated by ATL44/RHA3A and ATL45/RHA3B following phosphorylation upon the recognition of microbe-associated molecular patterns (MAMPs, e.g. flg22) by pattern recognition receptors (PRRs), then released from the FLS2/BAK1 complex and internalized dynamically into endocytic compartments followed by the activation of immune signaling.

It localises to the cell membrane. The protein localises to the endosome membrane. Its subcellular location is the nucleus. It catalyses the reaction L-seryl-[protein] + ATP = O-phospho-L-seryl-[protein] + ADP + H(+). It carries out the reaction L-threonyl-[protein] + ATP = O-phospho-L-threonyl-[protein] + ADP + H(+). Its activity is regulated as follows. Kinase activation is repressed by the phosphatase PP2C38. Functionally, plays a central role in immune responses. Required to activate the resistance responses to necrotrophic pathogens, including the regulation of defense hormone expression (e.g. jasmonic acid (JA) and salicylic acid (SA)). Phosphorylates FLS2 and BAK1. Involved in pathogen-associated molecular pattern (PAMP)-triggered immunity (PTI) signaling, including calcium signaling, and defense responses downstream of FLS2; upon PAMP recognition, first phosphorylated by FLS2 and SIK1 prior to being monoubiquitinated by ATL44/RHA3A and ATL45/RHA3B at the plasma membrane, then internalized dynamically into endocytic compartments together with FLS2. Acts additively with PBL1 in PTI defenses. Acts as a positive regulator of the PAMP flg22-induced increase of cytosolic calcium. Upon flg22 perception, phosphorylates and activates the calcium-permeable channel OSCA1.3, promoting stomatal closure. Phosphorylates the NADPH oxidase RBOHD at specific sites in a calcium-independent manner to enhance reactive oxygen species (ROS) generation upon flg22 perception. ROS production in response to flg22 controls stomatal movement and restriction of bacterial entry into leaf tissues. Seems not required for flg22-induced MAPK activation. Required for Pep1-induced defenses. Pep1 is an endogenous elicitor that potentiates PAMP-inducible plant responses. In association with PEPR1, acts downstream of the canonical ethylene signaling cascade to regulate ethylene responses. Involved in ethylene signaling. Destabilizes EIN3, the key transcription activator in ethylene signaling, and represses EIN3-dependent transcription. Acts as a negative regulator in brassinosteroid (BR) signaling. Functions in BR signaling by direct interaction with the BR receptor BRI1 cytosolic kinase domain. Required during SCOOP small peptides (e.g. SCOOP10 and SCOOP12) perception and signaling; receptor-like cytosolic kinases (RLCK) activated by BAK1/SERK3 and SERK4 coreceptors when associated with MIK2 upon the perception of SCOOP peptides. In terms of biological role, (Microbial infection) Xanthomonas campestris effector AvrAC/XopAC-mediated uridylylation prevents activation by phosphorylation at the same residues, thus affecting immune responses and reducing defense responses toward X.campestris, mediating avrAC/XopAC virulence functions. The polypeptide is Serine/threonine-protein kinase BIK1 (Arabidopsis thaliana (Mouse-ear cress)).